The primary structure comprises 118 residues: Basic phospholipase A2 PA-9C (118 aa).

7 cysteine pairs are disulfide-bonded: Cys-11–Cys-71, Cys-27–Cys-117, Cys-29–Cys-45, Cys-44–Cys-98, Cys-51–Cys-91, Cys-60–Cys-84, and Cys-78–Cys-89. Ca(2+)-binding residues include Tyr-28, Gly-30, and Gly-32. His-48 is a catalytic residue. Residue Asp-49 participates in Ca(2+) binding. Residue Asp-92 is part of the active site.

The protein belongs to the phospholipase A2 family. Group I subfamily. D49 sub-subfamily. Ca(2+) is required as a cofactor. As to expression, expressed by the venom gland.

It is found in the secreted. It carries out the reaction a 1,2-diacyl-sn-glycero-3-phosphocholine + H2O = a 1-acyl-sn-glycero-3-phosphocholine + a fatty acid + H(+). In terms of biological role, PLA2 catalyzes the calcium-dependent hydrolysis of the 2-acyl groups in 3-sn-phosphoglycerides. The protein is Basic phospholipase A2 PA-9C of Pseudechis australis (Mulga snake).